Reading from the N-terminus, the 283-residue chain is Pantothenate synthetase (283 aa).

Met30 to His37 lines the ATP pocket. Residue His37 is the Proton donor of the active site. Residue Gln61 coordinates (R)-pantoate. A beta-alanine-binding site is contributed by Gln61. ATP is bound at residue Gly149 to Asp152. Gln155 serves as a coordination point for (R)-pantoate. Residues Val178 and Phe186–Arg189 contribute to the ATP site.

Belongs to the pantothenate synthetase family. As to quaternary structure, homodimer.

It localises to the cytoplasm. It catalyses the reaction (R)-pantoate + beta-alanine + ATP = (R)-pantothenate + AMP + diphosphate + H(+). It participates in cofactor biosynthesis; (R)-pantothenate biosynthesis; (R)-pantothenate from (R)-pantoate and beta-alanine: step 1/1. Functionally, catalyzes the condensation of pantoate with beta-alanine in an ATP-dependent reaction via a pantoyl-adenylate intermediate. The polypeptide is Pantothenate synthetase (Proteus mirabilis (strain HI4320)).